We begin with the raw amino-acid sequence, 175 residues long: Large ribosomal subunit protein bL9 (175 aa).

Belongs to the bacterial ribosomal protein bL9 family.

Binds to the 23S rRNA. In Orientia tsutsugamushi (strain Boryong) (Rickettsia tsutsugamushi), this protein is Large ribosomal subunit protein bL9.